A 227-amino-acid chain; its full sequence is UPF0758 protein Rxyl_1530 (227 aa).

An MPN domain is found at 106 to 227; it reads VISSPADVDG…YFSMKEHGML (122 aa). Positions 177, 179, and 190 each coordinate Zn(2+). Positions 177–190 match the JAMM motif motif; the sequence is HNHPSGRVEPSRED.

The protein belongs to the UPF0758 family.

In Rubrobacter xylanophilus (strain DSM 9941 / JCM 11954 / NBRC 16129 / PRD-1), this protein is UPF0758 protein Rxyl_1530.